The following is a 1016-amino-acid chain: TBC1 domain family member 5 homolog B (1016 aa).

Disordered stretches follow at residues 1–23 (MDTS…IRNS), 60–109 (SPLI…TTTT), 179–209 (NNNN…DMNN), 463–566 (PTQQ…EEEE), and 704–872 (PPTT…SSHV). The span at 12-23 (NSGTTTPNIRNS) shows a compositional bias: polar residues. A compositionally biased stretch (low complexity) spans 79–88 (QQQQQQQQQQ). The region spanning 280–636 (LKYSPLRGIA…NIWDALFAYG (357 aa)) is the Rab-GAP TBC domain. A compositionally biased stretch (low complexity) spans 467 to 525 (TNNSNNSNNTNNNNTTTSPSSSSSSSSSSTTTAAATTVSSSTSTSSSSSTITSSSSSTV). A compositionally biased stretch (pro residues) spans 526 to 544 (SPPPPSSSSSPSPPPPPPL). The span at 545 to 558 (GSNSPTVASSSSSS) shows a compositional bias: low complexity. Over residues 704–717 (PPTTLSSSGSRQIP) the composition is skewed to polar residues. Composition is skewed to low complexity over residues 718–755 (NNNN…NNNI) and 766–789 (PFPE…QLSS). Residues 790–806 (ANTTPIDPLSNKTTPLI) show a composition bias toward polar residues. Low complexity predominate over residues 807–872 (SSTSNVSNTP…SSSLNNSSHV (66 aa)).

Functionally, may act as a GTPase-activating protein for Rab family protein(s). The sequence is that of TBC1 domain family member 5 homolog B (tbc1d5B) from Dictyostelium discoideum (Social amoeba).